The chain runs to 500 residues: Sodium/potassium/calcium exchanger 5 (500 aa).

The signal sequence occupies residues 1 to 29 (MQTKGGQTWARRALLLGILWATAHLPLSG). At 30 to 66 (TSLPQRLPRATGNSTQCVISPSSEFPEGFFTRQERRD) the chain is on the extracellular side. The chain crosses the membrane as a helical span at residues 67–87 (GGIIIYFLIIVYMFMAISIVC). Over 88–111 (DEYFLPSLEIISESLGLSQDVAGT) the chain is Cytoplasmic. A helical membrane pass occupies residues 112–132 (TFMAAGSSAPELVTAFLGVFI). Residues 133-136 (TKGD) are Extracellular-facing. Residues 137-157 (IGISTILGSAIYNLLGICAAC) traverse the membrane as a helical segment. Over 158–169 (GLLSNTVSTLSC) the chain is Cytoplasmic. Residues 170–190 (WPLFRDCAAYTISAAAVLGII) traverse the membrane as a helical segment. Residues 191-195 (YDNQV) lie on the Extracellular side of the membrane. The helical transmembrane segment at 196–216 (YWYEGALLLLIYGLYVLVLCF) threads the bilayer. The Cytoplasmic segment spans residues 217–302 (DIKINQYIIK…PSVFNMPEAD (86 aa)). Residues 303 to 323 (LKRIFWVLSLPIITLLFLTTP) traverse the membrane as a helical segment. Residues 324–333 (DCRKKFWKNY) lie on the Extracellular side of the membrane. Residues 334 to 354 (FVITFFMSAIWISAFTYILVW) form a helical membrane-spanning segment. Residues 355–368 (MVTITGETLEIPDT) are Cytoplasmic-facing. The helical transmembrane segment at 369–389 (VMGLTLLAAGTSIPDTIASVL) threads the bilayer. Over 390 to 399 (VARKGKGDMA) the chain is Extracellular. The helical transmembrane segment at 400-420 (MSNIVGSNVFDMLCLGIPWFI) threads the bilayer. The Cytoplasmic portion of the chain corresponds to 421-437 (KTAFINGSAPAEVNSRG). Residues 438–458 (LTYITISLNISIIFLFLAVHF) traverse the membrane as a helical segment. Over 459-468 (NGWKLDRKLG) the chain is Extracellular. A helical transmembrane segment spans residues 469-489 (IVCLLSYLGLATLSVLYELGI). Residues 490-500 (IGNNKIRGCGG) lie on the Cytoplasmic side of the membrane.

It belongs to the Ca(2+):cation antiporter (CaCA) (TC 2.A.19) family. SLC24A subfamily.

The protein localises to the golgi apparatus. The protein resides in the trans-Golgi network membrane. It localises to the melanosome. It carries out the reaction Ca(2+)(out) + K(+)(out) + 4 Na(+)(in) = Ca(2+)(in) + K(+)(in) + 4 Na(+)(out). Functionally, calcium, potassium:sodium antiporter that transports 1 Ca(2+) and 1 K(+) to the melanosome in exchange for 4 cytoplasmic Na(+). Involved in pigmentation, possibly by participating in ion transport in melanosomes. Predominant sodium-calcium exchanger in melanocytes. The sequence is that of Sodium/potassium/calcium exchanger 5 from Homo sapiens (Human).